The sequence spans 296 residues: Heme oxygenase 1 (296 aa).

At 1–273 (METSQPHNAE…RMQADMLTTS (273 aa)) the chain is on the cytoplasmic side. 4 residues coordinate heme b: Lys21, His28, Tyr137, and Arg186. The interval 231 to 264 (GHAVQPKAELRTRSVNKSHENSPAAGKESERTSR) is disordered. Over residues 238-250 (AELRTRSVNKSHE) the composition is skewed to basic and acidic residues. Residues 274 to 296 (PLVRWLLALGFIATTVAVGLFAM) traverse the membrane as a helical; Anchor for type IV membrane protein segment.

The protein belongs to the heme oxygenase family. In terms of assembly, homodimer and higher order homooligomer. Oligomerization is crucial for its stability and function in the endoplasmic reticulum. In terms of processing, a soluble form arises by proteolytic removal of the membrane anchor.

The protein localises to the endoplasmic reticulum membrane. It carries out the reaction heme b + 3 reduced [NADPH--hemoprotein reductase] + 3 O2 = biliverdin IXalpha + CO + Fe(2+) + 3 oxidized [NADPH--hemoprotein reductase] + 3 H2O + H(+). With respect to regulation, inhibited by metalloporphyrins in the following order of decreasing potency: tin mesoporphyrin &gt; tin protoporphyrin &gt; zinc protoporphyrin &gt; manganese protoporphyrin &gt; cobalt protoporphyrin. In terms of biological role, catalyzes the oxidative cleavage of heme at the alpha-methene bridge carbon, released as carbon monoxide (CO), to generate biliverdin IXalpha, while releasing the central heme iron chelate as ferrous iron. Affords protection against programmed cell death and this cytoprotective effect relies on its ability to catabolize free heme and prevent it from sensitizing cells to undergo apoptosis. Functionally, catalyzes the oxidative cleavage of heme at the alpha-methene bridge carbon, released as carbon monoxide (CO), to generate biliverdin IXalpha, while releasing the central heme iron chelate as ferrous iron. This chain is Heme oxygenase 1 (HMOX1), found in Gallus gallus (Chicken).